We begin with the raw amino-acid sequence, 342 residues long: Biotin synthase (342 aa).

The Radical SAM core domain maps to 63–288 (PEVEVEGIIS…RTMLRFAGGR (226 aa)). The [4Fe-4S] cluster site is built by Cys78, Cys82, and Cys85. Cys121, Cys154, Cys213, and Arg283 together coordinate [2Fe-2S] cluster.

It belongs to the radical SAM superfamily. Biotin synthase family. In terms of assembly, homodimer. The cofactor is [4Fe-4S] cluster. [2Fe-2S] cluster is required as a cofactor.

It carries out the reaction (4R,5S)-dethiobiotin + (sulfur carrier)-SH + 2 reduced [2Fe-2S]-[ferredoxin] + 2 S-adenosyl-L-methionine = (sulfur carrier)-H + biotin + 2 5'-deoxyadenosine + 2 L-methionine + 2 oxidized [2Fe-2S]-[ferredoxin]. The protein operates within cofactor biosynthesis; biotin biosynthesis; biotin from 7,8-diaminononanoate: step 2/2. Catalyzes the conversion of dethiobiotin (DTB) to biotin by the insertion of a sulfur atom into dethiobiotin via a radical-based mechanism. The sequence is that of Biotin synthase from Mycobacteroides abscessus (strain ATCC 19977 / DSM 44196 / CCUG 20993 / CIP 104536 / JCM 13569 / NCTC 13031 / TMC 1543 / L948) (Mycobacterium abscessus).